Here is a 1117-residue protein sequence, read N- to C-terminus: Reverse gyrase (1117 aa).

Residues 3–42 (LATGAKYYHSCINCGGINTDTRNEKGLPCEVCLPFEDGDV) form an RG N-terminal-type zinc finger. Zn(2+) contacts are provided by cysteine 13, cysteine 16, cysteine 31, and cysteine 34. ATP-binding positions include glutamine 84 and 101-108 (APTGVGKT). The region spanning 88-284 (AKRLLLSKSF…LFRELLGFEI (197 aa)) is the Helicase ATP-binding domain. A DEAD box motif is present at residues 206 to 209 (DDVD). Residues 551–1117 (KDMKSRMIIV…EELNEILIKN (567 aa)) are topoisomerase I. The Toprim domain maps to 555–712 (SRMIIVESPT…NVQRIEMHEI (158 aa)). Glutamate 561 lines the Mg(2+) pocket. An RG C-terminal-type zinc finger spans residues 631 to 658 (IKRCSSCGAQFTDELPRCPYCNSDKIDD). Zn(2+)-binding residues include cysteine 634, cysteine 637, cysteine 648, and cysteine 651. Position 681 (aspartate 681) interacts with Mg(2+). The region spanning 728-1114 (DVNLVKSQIV…NLYEELNEIL (387 aa)) is the Topo IA-type catalytic domain. The active-site O-(5'-phospho-DNA)-tyrosine intermediate is tyrosine 864.

It in the N-terminal section; belongs to the DEAD box helicase family. DDVD subfamily. In the C-terminal section; belongs to the type IA topoisomerase family. In terms of assembly, monomer. Requires Zn(2+) as cofactor. Mg(2+) serves as cofactor.

The protein localises to the cytoplasm. It carries out the reaction ATP + H2O = ADP + phosphate + H(+). Functionally, modifies the topological state of DNA by introducing positive supercoils in an ATP-dependent process, increasing the linking number in steps of +1; also positively supercoils with dATP and ATP-gamma-S. With UTP or dTTP relaxes negatively supercoiled DNA, in the absence of any nucleotide partially relaxes negative supercoils. In the absence of nucleotide has a higher affinity for dsDNA with a single-stranded tail than dsDNA or ssDNA. Has an ATPase activity in the absence of DNA. Binds to single-stranded DNA, transiently cleaves and then rejoins the ends, introducing a positive supercoil in the process. The scissile phosphodiester is attacked by the catalytic tyrosine of the enzyme, resulting in the formation of a DNA-(5'-phosphotyrosyl)-enzyme intermediate. Probably involved in rewinding DNA strands in regions of the chromosome that have opened up to allow replication, transcription, DNA repair and/or for DNA protection. This Caldanaerobacter subterraneus subsp. tengcongensis (strain DSM 15242 / JCM 11007 / NBRC 100824 / MB4) (Thermoanaerobacter tengcongensis) protein is Reverse gyrase.